The following is a 271-amino-acid chain: 4-hydroxy-tetrahydrodipicolinate reductase (271 aa).

Position 10-15 (Gly-10–Met-15) interacts with NAD(+). An NADP(+)-binding site is contributed by Arg-37. NAD(+) is bound by residues Gly-100–Thr-102 and Ser-124–Met-127. Residue His-157 is the Proton donor/acceptor of the active site. A (S)-2,3,4,5-tetrahydrodipicolinate-binding site is contributed by His-158. Lys-161 acts as the Proton donor in catalysis. (S)-2,3,4,5-tetrahydrodipicolinate is bound at residue Gly-167 to Thr-168. The tract at residues Ser-183 to Gly-202 is disordered. The segment covering Ser-185–Gly-202 has biased composition (basic and acidic residues).

The protein belongs to the DapB family.

The protein resides in the cytoplasm. It catalyses the reaction (S)-2,3,4,5-tetrahydrodipicolinate + NAD(+) + H2O = (2S,4S)-4-hydroxy-2,3,4,5-tetrahydrodipicolinate + NADH + H(+). The enzyme catalyses (S)-2,3,4,5-tetrahydrodipicolinate + NADP(+) + H2O = (2S,4S)-4-hydroxy-2,3,4,5-tetrahydrodipicolinate + NADPH + H(+). It functions in the pathway amino-acid biosynthesis; L-lysine biosynthesis via DAP pathway; (S)-tetrahydrodipicolinate from L-aspartate: step 4/4. In terms of biological role, catalyzes the conversion of 4-hydroxy-tetrahydrodipicolinate (HTPA) to tetrahydrodipicolinate. The protein is 4-hydroxy-tetrahydrodipicolinate reductase of Beijerinckia indica subsp. indica (strain ATCC 9039 / DSM 1715 / NCIMB 8712).